A 433-amino-acid polypeptide reads, in one-letter code: GTPase Der (433 aa).

EngA-type G domains are found at residues 3–167 (KIVS…DKNI) and 175–349 (PRIA…FNLR). GTP is bound by residues 9 to 16 (GRPNVGKS), 56 to 60 (DTGGY), 119 to 122 (NKID), 181 to 188 (GRPNVGKS), 228 to 232 (DTAGI), and 293 to 296 (NKWD). In terms of domain architecture, KH-like spans 350-433 (LRIKTSLLNK…IPIKILFRLK (84 aa)).

It belongs to the TRAFAC class TrmE-Era-EngA-EngB-Septin-like GTPase superfamily. EngA (Der) GTPase family. In terms of assembly, associates with the 50S ribosomal subunit.

GTPase that plays an essential role in the late steps of ribosome biogenesis. This is GTPase Der from Karelsulcia muelleri (strain GWSS) (Sulcia muelleri).